The following is a 243-amino-acid chain: Triosephosphate isomerase (243 aa).

9-11 (NWK) serves as a coordination point for substrate. The Electrophile role is filled by histidine 96. Glutamate 165 acts as the Proton acceptor in catalysis. Residues glycine 171, serine 204, and 225–226 (GG) contribute to the substrate site.

This sequence belongs to the triosephosphate isomerase family. As to quaternary structure, homodimer.

The protein resides in the cytoplasm. It carries out the reaction D-glyceraldehyde 3-phosphate = dihydroxyacetone phosphate. It functions in the pathway carbohydrate biosynthesis; gluconeogenesis. Its pathway is carbohydrate degradation; glycolysis; D-glyceraldehyde 3-phosphate from glycerone phosphate: step 1/1. In terms of biological role, involved in the gluconeogenesis. Catalyzes stereospecifically the conversion of dihydroxyacetone phosphate (DHAP) to D-glyceraldehyde-3-phosphate (G3P). This is Triosephosphate isomerase from Synechococcus sp. (strain CC9902).